Consider the following 311-residue polypeptide: MDRNELLKEPVKDISIKSETTISELIGMFGRSGGFTAKKIYEGYEIIKEMFNDDETTFLSFPADIISTGTRGIINELVKRKLVDVIITTNGTLDHDIARTYRDYYAGTFNFSDAMLRDLGINRLGNVFVPDESYGSIIEEKVMPILDELYKEKKEWSGYELIWELGKRINNESSIIYNAYKNRIPVFIPGMTDGSVGSQLWSFYEMNRDFRINLLEDEHKLSDIIFDAKKTGAIMIGGGISKHHTIWWNQFRDGLNQAVYITTAQEYDGSLSGAKLEEAISWKKVREDARFVNIYGDATVILPLIVAPFLK.

K284 serves as the catalytic Nucleophile.

The protein belongs to the deoxyhypusine synthase family. It depends on NAD(+) as a cofactor.

The enzyme catalyses [eIF5A protein]-L-lysine + spermidine = [eIF5A protein]-deoxyhypusine + propane-1,3-diamine. Its pathway is protein modification; eIF5A hypusination. In terms of biological role, catalyzes the NAD-dependent oxidative cleavage of spermidine and the subsequent transfer of the butylamine moiety of spermidine to the epsilon-amino group of a specific lysine residue of the eIF-5A precursor protein to form the intermediate deoxyhypusine residue. The chain is Probable deoxyhypusine synthase from Picrophilus torridus (strain ATCC 700027 / DSM 9790 / JCM 10055 / NBRC 100828 / KAW 2/3).